We begin with the raw amino-acid sequence, 422 residues long: Elongation factor 1-alpha (422 aa).

The region spanning Lys-5–Ser-221 is the tr-type G domain. The segment at Gly-14 to Ser-21 is G1. Position 14–21 (Gly-14–Ser-21) interacts with GTP. Ser-21 contacts Mg(2+). Positions Gly-70–Asp-74 are G2. Residues Asp-91–Gly-94 are G3. GTP-binding positions include Asp-91–His-95 and Asn-146–Asp-149. The tract at residues Asn-146 to Asp-149 is G4. The segment at Ser-185–Phe-187 is G5.

The protein belongs to the TRAFAC class translation factor GTPase superfamily. Classic translation factor GTPase family. EF-Tu/EF-1A subfamily.

It localises to the cytoplasm. It carries out the reaction GTP + H2O = GDP + phosphate + H(+). GTP hydrolase that promotes the GTP-dependent binding of aminoacyl-tRNA to the A-site of ribosomes during protein biosynthesis. This is Elongation factor 1-alpha from Methanosarcina barkeri (strain Fusaro / DSM 804).